Consider the following 105-residue polypeptide: N(4)-acetylcytidine amidohydrolase (105 aa).

Residues 7–93 enclose the ASCH domain; it reads TFFERFEHDI…VIAEIYPGLE (87 aa). Lys21 serves as the catalytic Proton acceptor. The Nucleophile role is filled by Thr24. Glu74 functions as the Proton donor in the catalytic mechanism.

Belongs to the N(4)-acetylcytidine amidohydrolase family.

It carries out the reaction N(4)-acetylcytidine + H2O = cytidine + acetate + H(+). The enzyme catalyses N(4)-acetyl-2'-deoxycytidine + H2O = 2'-deoxycytidine + acetate + H(+). The catalysed reaction is N(4)-acetylcytosine + H2O = cytosine + acetate + H(+). Catalyzes the hydrolysis of N(4)-acetylcytidine (ac4C). The chain is N(4)-acetylcytidine amidohydrolase from Shewanella baltica (strain OS223).